Consider the following 425-residue polypeptide: Serine--tRNA ligase (425 aa).

232-234 (TSE) provides a ligand contact to L-serine. Residues 263–265 (RRE) and Val279 contribute to the ATP site. Position 286 (Glu286) interacts with L-serine. 350–353 (EVVS) contributes to the ATP binding site. Thr387 is an L-serine binding site.

The protein belongs to the class-II aminoacyl-tRNA synthetase family. Type-1 seryl-tRNA synthetase subfamily. Homodimer. The tRNA molecule binds across the dimer.

The protein resides in the cytoplasm. It carries out the reaction tRNA(Ser) + L-serine + ATP = L-seryl-tRNA(Ser) + AMP + diphosphate + H(+). It catalyses the reaction tRNA(Sec) + L-serine + ATP = L-seryl-tRNA(Sec) + AMP + diphosphate + H(+). It functions in the pathway aminoacyl-tRNA biosynthesis; selenocysteinyl-tRNA(Sec) biosynthesis; L-seryl-tRNA(Sec) from L-serine and tRNA(Sec): step 1/1. Catalyzes the attachment of serine to tRNA(Ser). Is also able to aminoacylate tRNA(Sec) with serine, to form the misacylated tRNA L-seryl-tRNA(Sec), which will be further converted into selenocysteinyl-tRNA(Sec). The protein is Serine--tRNA ligase of Methanocella arvoryzae (strain DSM 22066 / NBRC 105507 / MRE50).